Reading from the N-terminus, the 1255-residue chain is Stress response protein NST1 (1255 aa).

Pro residues predominate over residues 1-19 (MKGNRNPPPPPSGPVPPSP). Disordered regions lie at residues 1-214 (MKGN…SQEE), 285-379 (NHPN…SEEL), 470-525 (RAYD…RMEE), 563-898 (EAEN…PPMG), and 956-1080 (HPPP…PPFG). The span at 50–61 (PSPTASSLAAKP) shows a compositional bias: low complexity. Positions 76–86 (NRKKQKRRAKA) are enriched in basic residues. Low complexity predominate over residues 87 to 96 (AAKAAAERAQ). Acidic residues predominate over residues 118-127 (ADPEDDEDEP). Residues 151–162 (KSKKSKKKKKKN) show a composition bias toward basic residues. Positions 187–196 (PILPPPPPQQ) are enriched in pro residues. Positions 201 to 214 (MSREKIWNTNSQEE) are enriched in basic and acidic residues. Acidic residues predominate over residues 330–376 (ELEGDEEEEEVEAEAEDDGEGDEEGEDVYSEDELEDDMYSEEEQEPS). Residues 470–481 (RAYDHPNGERYV) are compositionally biased toward basic and acidic residues. The segment covering 488 to 518 (PDEEEFEDEEEEYEEDDEEEYNSPDEEDTMT) has biased composition (acidic residues). A coiled-coil region spans residues 547-745 (REKVAKERQA…ERRKKEERAA (199 aa)). Composition is skewed to basic and acidic residues over residues 590–630 (KKEA…AEEK) and 637–745 (QRKA…ERAA). The segment covering 770-780 (PPAPPVAPVPV) has biased composition (pro residues). Positions 811 to 835 (QTSQQDGSTASSGAASNSGSMASQN) are enriched in low complexity. Polar residues-rich tracts occupy residues 865–877 (QGSA…SASP) and 983–1004 (RDNQ…QPIS). Positions 1067-1080 (GPRPAPGFPMPPFG) are enriched in pro residues.

Belongs to the NST1 family.

The protein resides in the cytoplasm. May act as a negative regulator of salt tolerance. The chain is Stress response protein NST1 (NST1) from Chaetomium globosum (strain ATCC 6205 / CBS 148.51 / DSM 1962 / NBRC 6347 / NRRL 1970) (Soil fungus).